The chain runs to 401 residues: uncharacterized protein (401 aa).

Helical transmembrane passes span 20-40 (FFGELLTSLTGAMMGPFMVLY), 49-69 (IMMPMLIISLQPFADIFLTLA), 83-100 (ILTALLLQSAAMTGFVFA), 104-121 (YVFAILYVMNGIGRSLYI), 140-160 (VFAVINAIYSTGLTAGPLVGM), 167-187 (PVWIFALDAAALFIYFLIAAL), 207-227 (FTIYRPVLLLLLLSLPISMLY), 248-268 (MLTIYSAAKALFSCVLQVPLV), 289-309 (LAAAGFACSTSLTMLLVTAAV), and 357-377 (GLILTSFGGEVIFYALAVCLL).

The protein belongs to the major facilitator superfamily.

The protein localises to the cell membrane. This is an uncharacterized protein from Bacillus subtilis (strain 168).